A 313-amino-acid polypeptide reads, in one-letter code: Protoheme IX farnesyltransferase (313 aa).

8 helical membrane passes run 23 to 43, 56 to 76, 107 to 127, 128 to 148, 155 to 175, 182 to 202, 243 to 263, and 291 to 311; these read ILAY…VTTI, PLLI…ANTL, LIFG…TANL, LSGL…TLVL, NVVW…SAVT, ALVM…ALAM, LALA…VWFL, and YLAV…PTLF.

This sequence belongs to the UbiA prenyltransferase family. Protoheme IX farnesyltransferase subfamily.

Its subcellular location is the cell membrane. The enzyme catalyses heme b + (2E,6E)-farnesyl diphosphate + H2O = Fe(II)-heme o + diphosphate. It participates in porphyrin-containing compound metabolism; heme O biosynthesis; heme O from protoheme: step 1/1. Its function is as follows. Converts heme B (protoheme IX) to heme O by substitution of the vinyl group on carbon 2 of heme B porphyrin ring with a hydroxyethyl farnesyl side group. This chain is Protoheme IX farnesyltransferase, found in Mycobacteroides abscessus (strain ATCC 19977 / DSM 44196 / CCUG 20993 / CIP 104536 / JCM 13569 / NCTC 13031 / TMC 1543 / L948) (Mycobacterium abscessus).